We begin with the raw amino-acid sequence, 884 residues long: Valine--tRNA ligase (884 aa).

The 'HIGH' region signature appears at 43 to 53 (PNVTGSLHIGH). Positions 530–534 (KMSKS) match the 'KMSKS' region motif. An ATP-binding site is contributed by lysine 533. Positions 817-884 (VIDLDAERGR…KLKAALERLM (68 aa)) form a coiled coil.

The protein belongs to the class-I aminoacyl-tRNA synthetase family. ValS type 1 subfamily. As to quaternary structure, monomer.

It is found in the cytoplasm. It carries out the reaction tRNA(Val) + L-valine + ATP = L-valyl-tRNA(Val) + AMP + diphosphate. Its function is as follows. Catalyzes the attachment of valine to tRNA(Val). As ValRS can inadvertently accommodate and process structurally similar amino acids such as threonine, to avoid such errors, it has a 'posttransfer' editing activity that hydrolyzes mischarged Thr-tRNA(Val) in a tRNA-dependent manner. The sequence is that of Valine--tRNA ligase from Zymomonas mobilis subsp. mobilis (strain ATCC 31821 / ZM4 / CP4).